A 199-amino-acid polypeptide reads, in one-letter code: Cytochrome c oxidase subunit 2 (199 aa).

A helical transmembrane segment spans residues 1 to 13 (AICSLVLYLLSLM). The Mitochondrial matrix segment spans residues 14-26 (LMEKLSSNTVDAQ). A helical transmembrane segment spans residues 27–54 (EVELIWTILPAIVLILLALPSLQILYMM). Over 55-199 (DEIDEPDLTL…SSLLSSSSSL (145 aa)) the chain is Mitochondrial intermembrane. 6 residues coordinate Cu cation: His128, Cys163, Glu165, Cys167, His171, and Met174. Glu165 serves as a coordination point for Mg(2+).

Belongs to the cytochrome c oxidase subunit 2 family. Component of the cytochrome c oxidase (complex IV, CIV), a multisubunit enzyme composed of 14 subunits. The complex is composed of a catalytic core of 3 subunits MT-CO1, MT-CO2 and MT-CO3, encoded in the mitochondrial DNA, and 11 supernumerary subunits COX4I, COX5A, COX5B, COX6A, COX6B, COX6C, COX7A, COX7B, COX7C, COX8 and NDUFA4, which are encoded in the nuclear genome. The complex exists as a monomer or a dimer and forms supercomplexes (SCs) in the inner mitochondrial membrane with NADH-ubiquinone oxidoreductase (complex I, CI) and ubiquinol-cytochrome c oxidoreductase (cytochrome b-c1 complex, complex III, CIII), resulting in different assemblies (supercomplex SCI(1)III(2)IV(1) and megacomplex MCI(2)III(2)IV(2)). Found in a complex with TMEM177, COA6, COX18, COX20, SCO1 and SCO2. Interacts with TMEM177 in a COX20-dependent manner. Interacts with COX20. Interacts with COX16. Cu cation serves as cofactor.

It is found in the mitochondrion inner membrane. The catalysed reaction is 4 Fe(II)-[cytochrome c] + O2 + 8 H(+)(in) = 4 Fe(III)-[cytochrome c] + 2 H2O + 4 H(+)(out). Component of the cytochrome c oxidase, the last enzyme in the mitochondrial electron transport chain which drives oxidative phosphorylation. The respiratory chain contains 3 multisubunit complexes succinate dehydrogenase (complex II, CII), ubiquinol-cytochrome c oxidoreductase (cytochrome b-c1 complex, complex III, CIII) and cytochrome c oxidase (complex IV, CIV), that cooperate to transfer electrons derived from NADH and succinate to molecular oxygen, creating an electrochemical gradient over the inner membrane that drives transmembrane transport and the ATP synthase. Cytochrome c oxidase is the component of the respiratory chain that catalyzes the reduction of oxygen to water. Electrons originating from reduced cytochrome c in the intermembrane space (IMS) are transferred via the dinuclear copper A center (CU(A)) of subunit 2 and heme A of subunit 1 to the active site in subunit 1, a binuclear center (BNC) formed by heme A3 and copper B (CU(B)). The BNC reduces molecular oxygen to 2 water molecules using 4 electrons from cytochrome c in the IMS and 4 protons from the mitochondrial matrix. This chain is Cytochrome c oxidase subunit 2 (MT-CO2), found in Rhea americana (Greater rhea).